A 509-amino-acid chain; its full sequence is Aspartyl/glutamyl-tRNA(Asn/Gln) amidotransferase subunit B (509 aa).

This sequence belongs to the GatB/GatE family. GatB subfamily. Heterotrimer of A, B and C subunits.

The catalysed reaction is L-glutamyl-tRNA(Gln) + L-glutamine + ATP + H2O = L-glutaminyl-tRNA(Gln) + L-glutamate + ADP + phosphate + H(+). It carries out the reaction L-aspartyl-tRNA(Asn) + L-glutamine + ATP + H2O = L-asparaginyl-tRNA(Asn) + L-glutamate + ADP + phosphate + 2 H(+). Its function is as follows. Allows the formation of correctly charged Asn-tRNA(Asn) or Gln-tRNA(Gln) through the transamidation of misacylated Asp-tRNA(Asn) or Glu-tRNA(Gln) in organisms which lack either or both of asparaginyl-tRNA or glutaminyl-tRNA synthetases. The reaction takes place in the presence of glutamine and ATP through an activated phospho-Asp-tRNA(Asn) or phospho-Glu-tRNA(Gln). The sequence is that of Aspartyl/glutamyl-tRNA(Asn/Gln) amidotransferase subunit B from Psychrobacter arcticus (strain DSM 17307 / VKM B-2377 / 273-4).